The sequence spans 402 residues: 26S proteasome non-ATPase regulatory subunit 4 homolog (402 aa).

Residues 5–189 (ATMICIDNSE…LSDVLISTPI (185 aa)) form the VWFA domain. The UIM 1 domain occupies 221–240 (NVDPELALALRLSMEEERAR). The segment covering 241-261 (QEAIAKKAAEESSGAENKDHA) has biased composition (basic and acidic residues). 2 disordered regions span residues 241–292 (QEAI…EDDD) and 302–321 (MSME…MAEA). UIM domains follow at residues 291–310 (DDAQ…GSSG) and 323–342 (VDDQ…AGGS). The segment at 363–402 (SLPGVDPNDPSVKDLLASLHGQGEQEKKEDKSDKPEDEKK) is disordered. Residues 385–402 (GEQEKKEDKSDKPEDEKK) show a composition bias toward basic and acidic residues.

This sequence belongs to the proteasome subunit S5A family. As to quaternary structure, component of the 19S regulatory particle (RP/PA700) base subcomplex of the 26S proteasome. The 26S proteasome is composed of a core protease (CP), known as the 20S proteasome, capped at one or both ends by the 19S regulatory particle (RP/PA700). The RP/PA700 complex is composed of at least 17 different subunits in two subcomplexes, the base and the lid, which form the portions proximal and distal to the 20S proteolytic core, respectively. Interacts with PI4KG4.

In terms of biological role, plays a role in maintaining the structural integrity of the 19S regulatory particle (RP), subcomplex of the 26S proteasome. Plays a major role in both the direct and indirect recognition of ubiquitinated substrates of ubiquitin/26S proteasome-mediated proteolysis (UPP). Binds and presumably selects ubiquitin-conjugates for destruction. The protein is 26S proteasome non-ATPase regulatory subunit 4 homolog of Oryza sativa subsp. japonica (Rice).